Here is a 196-residue protein sequence, read N- to C-terminus: Large ribosomal subunit protein bL25 (196 aa).

It belongs to the bacterial ribosomal protein bL25 family. CTC subfamily. In terms of assembly, part of the 50S ribosomal subunit; part of the 5S rRNA/L5/L18/L25 subcomplex. Contacts the 5S rRNA. Binds to the 5S rRNA independently of L5 and L18.

Its function is as follows. This is one of the proteins that binds to the 5S RNA in the ribosome where it forms part of the central protuberance. The sequence is that of Large ribosomal subunit protein bL25 from Geotalea daltonii (strain DSM 22248 / JCM 15807 / FRC-32) (Geobacter daltonii).